We begin with the raw amino-acid sequence, 317 residues long: Melanocyte-stimulating hormone receptor (317 aa).

Residues 1–37 (MPMQGAQRKLLGSLNSTPTATSNLGLAANHTGAPCLE) are Extracellular-facing. A glycan (N-linked (GlcNAc...) asparagine) is linked at Asn29. A helical transmembrane segment spans residues 38–63 (VSIPDGLFLSLGLVSLVENVLVVAAI). Topologically, residues 64–72 (AKNRNLHSS) are cytoplasmic. The chain crosses the membrane as a helical span at residues 73 to 93 (MYCFICCLALSDLLVSGSNML). At 94-118 (ETAVILLLEAGALATRTSAVQRLHN) the chain is on the extracellular side. Residues 119-140 (TIDVLTCSSMLCSLCFLGAIAV) traverse the membrane as a helical segment. The Cytoplasmic segment spans residues 141 to 163 (DRYISIFYALRYHSIVTLPRTQR). A helical membrane pass occupies residues 164–183 (VIAAIWVASVLSSTLFITYY). The Extracellular portion of the chain corresponds to 184–191 (DHAAVLLC). The helical transmembrane segment at 192–211 (LVVFFLAMLVLMAVLYVHML) threads the bilayer. The Cytoplasmic segment spans residues 212–240 (ARACQHAHGIIRLHKRQSPAHQGFGLRGA). Residues 241-266 (ATLTILLGIFFLCWGPFFLHLTLVVF) traverse the membrane as a helical segment. Residues 267–279 (CPQHLTCSCIFKN) are Extracellular-facing. The helical transmembrane segment at 280 to 300 (FKVFLTLIICNTIIDPLIYAF) threads the bilayer. Over 301-317 (RSQELRRTLKEVLLCSW) the chain is Cytoplasmic. Residue Cys315 is the site of S-palmitoyl cysteine attachment.

The protein belongs to the G-protein coupled receptor 1 family. As to quaternary structure, interacts with MGRN1, but does not undergo MGRN1-mediated ubiquitination; this interaction competes with GNAS-binding and thus inhibits agonist-induced cAMP production. Interacts with OPN3; the interaction results in a decrease in MC1R-mediated cAMP signaling and ultimately a decrease in melanin production in melanocytes.

It is found in the cell membrane. Receptor for MSH (alpha, beta and gamma) and ACTH. The activity of this receptor is mediated by G proteins which activate adenylate cyclase. Mediates melanogenesis, the production of eumelanin (black/brown) and phaeomelanin (red/yellow), via regulation of cAMP signaling in melanocytes. This is Melanocyte-stimulating hormone receptor (MC1R) from Saguinus imperator (Emperor tamarin).